Reading from the N-terminus, the 261-residue chain is Indole-3-glycerol phosphate synthase (261 aa).

Belongs to the TrpC family.

It catalyses the reaction 1-(2-carboxyphenylamino)-1-deoxy-D-ribulose 5-phosphate + H(+) = (1S,2R)-1-C-(indol-3-yl)glycerol 3-phosphate + CO2 + H2O. Its pathway is amino-acid biosynthesis; L-tryptophan biosynthesis; L-tryptophan from chorismate: step 4/5. This Campylobacter curvus (strain 525.92) protein is Indole-3-glycerol phosphate synthase.